Here is a 123-residue protein sequence, read N- to C-terminus: UPF0102 protein Pcar_2217 (123 aa).

Belongs to the UPF0102 family.

In Syntrophotalea carbinolica (strain DSM 2380 / NBRC 103641 / GraBd1) (Pelobacter carbinolicus), this protein is UPF0102 protein Pcar_2217.